A 144-amino-acid polypeptide reads, in one-letter code: Deoxyuridine 5'-triphosphate nucleotidohydrolase (144 aa).

Substrate contacts are provided by residues 63–65 (RSG), Asn-76, and 80–82 (TVD).

Belongs to the dUTPase family. Mg(2+) is required as a cofactor.

It carries out the reaction dUTP + H2O = dUMP + diphosphate + H(+). It functions in the pathway pyrimidine metabolism; dUMP biosynthesis; dUMP from dCTP (dUTP route): step 2/2. Its function is as follows. This enzyme is involved in nucleotide metabolism: it produces dUMP, the immediate precursor of thymidine nucleotides and it decreases the intracellular concentration of dUTP so that uracil cannot be incorporated into DNA. This is Deoxyuridine 5'-triphosphate nucleotidohydrolase from Flavobacterium johnsoniae (strain ATCC 17061 / DSM 2064 / JCM 8514 / BCRC 14874 / CCUG 350202 / NBRC 14942 / NCIMB 11054 / UW101) (Cytophaga johnsonae).